Consider the following 276-residue polypeptide: Eukaryotic translation initiation factor 3 subunit G-2 (276 aa).

In terms of domain architecture, RRM spans 196–274; the sequence is SAVRISNLSE…LILCVEWSKP (79 aa).

It belongs to the eIF-3 subunit G family. Component of the eukaryotic translation initiation factor 3 (eIF-3) complex. The eIF-3 complex interacts with pix.

It is found in the cytoplasm. In terms of biological role, RNA-binding component of the eukaryotic translation initiation factor 3 (eIF-3) complex, which is involved in protein synthesis of a specialized repertoire of mRNAs and, together with other initiation factors, stimulates binding of mRNA and methionyl-tRNAi to the 40S ribosome. The eIF-3 complex specifically targets and initiates translation of a subset of mRNAs involved in cell proliferation. This subunit can bind 18S rRNA. This chain is Eukaryotic translation initiation factor 3 subunit G-2, found in Drosophila persimilis (Fruit fly).